A 206-amino-acid chain; its full sequence is KH domain-containing protein 3 (206 aa).

Residues 1–40 form an involved in RNA binding region; sequence MDTPRRFPTLVQLMQPKAMPVEVLGHLPKRFSWFHSEFLK. One can recognise a KH; atypical domain in the interval 40-103; that stretch reads KNPKVVRLEV…SYQEDTIKMI (64 aa). Residues 144–153 are compositionally biased toward basic and acidic residues; the sequence is GTQRSVEVRE. Residues 144–206 are disordered; it reads GTQRSVEVRE…EDTRAPVTRL (63 aa). Residue Thr-145 is modified to Phosphothreonine. Residues 166–183 are compositionally biased toward polar residues; it reads TGTQQSLEAANQSGTQRS. Ser-171 is subject to Phosphoserine.

This sequence belongs to the KHDC1 family. In terms of assembly, component of the subcortical maternal complex (SCMC), at least composed of NLRP5, KHDC3L, OOEP, and TLE6. Within the complex, interacts with NLRP5, KHDC3L and TLE6. The SCMC may facilitate translocation of its components between the nuclear and cytoplasmic compartments. Forms a scaffold complex with OOEP/FLOPED, and interacts with BLM and TRIM25 at DNA replication forks. Interacts with PARP1; the interaction is increased following the formation of DNA double-strand breaks. Interacts with NUMA1.

It is found in the cytoplasm. The protein localises to the cell cortex. Its subcellular location is the nucleus. The protein resides in the mitochondrion. It localises to the cytoskeleton. It is found in the microtubule organizing center. The protein localises to the centrosome. Its subcellular location is the chromosome. Its function is as follows. Component of the subcortical maternal complex (SCMC), a multiprotein complex that plays a key role in early embryonic development. The SCMC complex is a structural constituent of cytoplasmic lattices, which consist in fibrous structures found in the cytoplasm of oocytes and preimplantation embryos. They are required to store maternal proteins critical for embryonic development, such as proteins that control epigenetic reprogramming of the preimplantation embryo, and prevent their degradation or activation. KHDC3 ensures proper spindle assembly by regulating the localization of AURKA via RHOA signaling and of PLK1 via a RHOA-independent process. Required for the localization of MAD2L1 to kinetochores to enable spindle assembly checkpoint function. As part of the OOEP-KHDC3 scaffold, recruits BLM and TRIM25 to DNA replication forks, thereby promoting the ubiquitination of BLM by TRIM25, enhancing BLM retainment at replication forks and therefore promoting stalled replication fork restart. Regulates homologous recombination-mediated DNA repair via recruitment of RAD51 to sites of DNA double-strand breaks, and sustainment of PARP1 activity, which in turn modulates downstream ATM or ATR activation. Activation of ATM or ATR in response to DNA double-strand breaks may be cell-type specific. Its role in DNA double-strand break repair is independent of its role in restarting stalled replication forks. Promotes neural stem cell neurogenesis and neuronal differentiation in the hippocampus. May regulate normal development of learning, memory and anxiety. Capable of binding RNA. This Macaca mulatta (Rhesus macaque) protein is KH domain-containing protein 3 (KHDC3L).